The sequence spans 118 residues: Large ribosomal subunit protein bL20 (118 aa).

The protein belongs to the bacterial ribosomal protein bL20 family.

In terms of biological role, binds directly to 23S ribosomal RNA and is necessary for the in vitro assembly process of the 50S ribosomal subunit. It is not involved in the protein synthesizing functions of that subunit. The chain is Large ribosomal subunit protein bL20 from Hahella chejuensis (strain KCTC 2396).